We begin with the raw amino-acid sequence, 1430 residues long: FYVE, RhoGEF and PH domain-containing protein 6 (1430 aa).

The interval 1–36 is disordered; sequence MTSAAEIKKPPVAPKPKFVVANNKPAPPPIAPKPDI. Positions 15–24 are enriched in low complexity; sequence KPKFVVANNK. At Ser231 the chain carries Phosphoserine. The segment at 330-351 is disordered; that stretch reads CVDTPSESTEEPGNSDSSSSCL. Polar residues predominate over residues 334 to 351; it reads PSESTEEPGNSDSSSSCL. The residue at position 515 (Ser515) is a Phosphoserine. The segment at 516 to 538 is disordered; it reads EELLEKSSYPSSEEKSSEKSLER. The segment covering 527 to 538 has biased composition (basic and acidic residues); sequence SEEKSSEKSLER. 4 positions are modified to phosphoserine: Ser554, Ser605, Ser692, and Ser721. Disordered stretches follow at residues 695 to 739 and 800 to 869; these read NYSL…PYKS and PDGQ…NGMK. Residues 728–739 show a composition bias toward polar residues; the sequence is SRESSSQAPYKS. A compositionally biased stretch (acidic residues) spans 831-847; the sequence is PSDEEEIINSSDEDDVS. Residues 851 to 868 show a composition bias toward basic and acidic residues; sequence SKGEPDPLEDKQDEDNGM. The DH domain occupies 871–1060; sequence KVHHIAKEIM…IEVANHANDT (190 aa). The PH 1 domain occupies 1089–1183; sequence VFLKEGILMK…WLEAISRAIE (95 aa). The residue at position 1197 (Ser1197) is a Phosphoserine. The FYVE-type zinc-finger motif lies at 1222–1281; that stretch reads DTRATMCMICTSEFTLTWRRHHCRACGKIVCQACSSNKYGLDYLKNQPARVCEHCFQELQ. Zn(2+) is bound by residues Cys1228, Cys1231, Cys1244, Cys1247, Cys1252, Cys1255, Cys1273, and Cys1276. Residues 1333-1429 form the PH 2 domain; sequence DSSMSGYLYR…WIEAFQEGTI (97 aa).

The protein resides in the cytoplasm. Its subcellular location is the cytoskeleton. Its function is as follows. May activate CDC42, a member of the Ras-like family of Rho- and Rac proteins, by exchanging bound GDP for free GTP. May play a role in regulating the actin cytoskeleton and cell shape. This chain is FYVE, RhoGEF and PH domain-containing protein 6 (FGD6), found in Homo sapiens (Human).